The chain runs to 453 residues: Pup--protein ligase (453 aa).

Mg(2+) is bound at residue E9. Residue R53 coordinates ATP. A Mg(2+)-binding site is contributed by Y55. D57 serves as the catalytic Proton acceptor. E63 is a binding site for Mg(2+). ATP-binding residues include T66 and W420.

The protein belongs to the Pup ligase/Pup deamidase family. Pup-conjugating enzyme subfamily.

It catalyses the reaction ATP + [prokaryotic ubiquitin-like protein]-L-glutamate + [protein]-L-lysine = ADP + phosphate + N(6)-([prokaryotic ubiquitin-like protein]-gamma-L-glutamyl)-[protein]-L-lysine.. It functions in the pathway protein degradation; proteasomal Pup-dependent pathway. Its pathway is protein modification; protein pupylation. Catalyzes the covalent attachment of the prokaryotic ubiquitin-like protein modifier Pup to the proteasomal substrate proteins, thereby targeting them for proteasomal degradation. This tagging system is termed pupylation. The ligation reaction involves the side-chain carboxylate of the C-terminal glutamate of Pup and the side-chain amino group of a substrate lysine. The sequence is that of Pup--protein ligase from Kribbella flavida (strain DSM 17836 / JCM 10339 / NBRC 14399).